The primary structure comprises 62 residues: Cecropin-D (62 aa).

Residues 1-22 form the signal peptide; sequence MNFTKILFFVVACVFAMRTVSA. The propeptide at 23–24 is removed by a dipeptidylpeptidase; the sequence is AP. Residue K60 is modified to Lysine amide.

The protein belongs to the cecropin family.

Its subcellular location is the secreted. Functionally, cecropins have lytic and antibacterial activity against several Gram-positive and Gram-negative bacteria. This is Cecropin-D from Hyalophora cecropia (Cecropia moth).